The primary structure comprises 370 residues: 3-isopropylmalate dehydrogenase (370 aa).

77–90 is a binding site for NAD(+); it reads GPKWDSVPYEVRPE. Residues R97, R107, R135, and D226 each coordinate substrate. The Mg(2+) site is built by D226, D250, and D254. 290-302 lines the NAD(+) pocket; it reads GSAPDIAGKGIAN.

Belongs to the isocitrate and isopropylmalate dehydrogenases family. LeuB type 1 subfamily. In terms of assembly, homodimer. The cofactor is Mg(2+). Mn(2+) serves as cofactor.

The protein resides in the cytoplasm. It carries out the reaction (2R,3S)-3-isopropylmalate + NAD(+) = 4-methyl-2-oxopentanoate + CO2 + NADH. The protein operates within amino-acid biosynthesis; L-leucine biosynthesis; L-leucine from 3-methyl-2-oxobutanoate: step 3/4. In terms of biological role, catalyzes the oxidation of 3-carboxy-2-hydroxy-4-methylpentanoate (3-isopropylmalate) to 3-carboxy-4-methyl-2-oxopentanoate. The product decarboxylates to 4-methyl-2 oxopentanoate. In Brucella melitensis biotype 1 (strain ATCC 23456 / CCUG 17765 / NCTC 10094 / 16M), this protein is 3-isopropylmalate dehydrogenase.